A 237-amino-acid chain; its full sequence is uncharacterized protein (237 aa).

The next 7 helical transmembrane spans lie at 19–39 (ILNG…GLAW), 51–71 (YDSP…YGLS), 81–101 (IAGV…ASLV), 106–126 (IIIV…AGLL), 136–156 (FIIM…AALM), 159–179 (RPIW…ISHG), and 209–229 (LYYY…TLVW).

The protein resides in the cell membrane. This is an uncharacterized protein from Escherichia coli (strain K12).